The following is a 226-amino-acid chain: Uridylate kinase (226 aa).

9 to 13 provides a ligand contact to ATP; that stretch reads KVSGK. Residue Gly46 participates in UMP binding. ATP-binding residues include Gly47 and Arg51. UMP is bound by residues Asp68 and 116–122; that span reads FQPGQST. Residues Thr142, Tyr148, and Asp151 each coordinate ATP.

This sequence belongs to the UMP kinase family. As to quaternary structure, homohexamer.

It localises to the cytoplasm. It catalyses the reaction UMP + ATP = UDP + ADP. The protein operates within pyrimidine metabolism; CTP biosynthesis via de novo pathway; UDP from UMP (UMPK route): step 1/1. With respect to regulation, inhibited by UTP. Its function is as follows. Catalyzes the reversible phosphorylation of UMP to UDP. This is Uridylate kinase from Hyperthermus butylicus (strain DSM 5456 / JCM 9403 / PLM1-5).